A 465-amino-acid polypeptide reads, in one-letter code: ATP synthase subunit beta (465 aa).

An ATP-binding site is contributed by 152-159 (GGAGVGKT).

Belongs to the ATPase alpha/beta chains family. F-type ATPases have 2 components, CF(1) - the catalytic core - and CF(0) - the membrane proton channel. CF(1) has five subunits: alpha(3), beta(3), gamma(1), delta(1), epsilon(1). CF(0) has three main subunits: a(1), b(2) and c(9-12). The alpha and beta chains form an alternating ring which encloses part of the gamma chain. CF(1) is attached to CF(0) by a central stalk formed by the gamma and epsilon chains, while a peripheral stalk is formed by the delta and b chains.

Its subcellular location is the cell membrane. The enzyme catalyses ATP + H2O + 4 H(+)(in) = ADP + phosphate + 5 H(+)(out). Produces ATP from ADP in the presence of a proton gradient across the membrane. The catalytic sites are hosted primarily by the beta subunits. The sequence is that of ATP synthase subunit beta from Ruminiclostridium cellulolyticum (strain ATCC 35319 / DSM 5812 / JCM 6584 / H10) (Clostridium cellulolyticum).